Here is a 274-residue protein sequence, read N- to C-terminus: Undecaprenyl-diphosphatase 1 (274 aa).

8 helical membrane passes run 7–27, 48–68, 88–108, 115–135, 151–171, 189–209, 221–241, and 253–273; these read LEIFKAVILGIVQGITEWLPV, FISTFLVVIQFGSILAVLVIF, VRLWLKVIIAVIPSGVIGILF, LFFNSTVVAIALIVYGIIMIG, VTYKLALCIGLFQCLALIPGT, YVAAEFSFFLAIPTMLGASAL, FEWLILGVGSVVAFVVSIVVI, and FKVFGYYRIVLGIVVLAYFFL.

This sequence belongs to the UppP family.

It is found in the cell membrane. The enzyme catalyses di-trans,octa-cis-undecaprenyl diphosphate + H2O = di-trans,octa-cis-undecaprenyl phosphate + phosphate + H(+). Catalyzes the dephosphorylation of undecaprenyl diphosphate (UPP). Confers resistance to bacitracin. This Clostridioides difficile (strain 630) (Peptoclostridium difficile) protein is Undecaprenyl-diphosphatase 1.